Here is a 741-residue protein sequence, read N- to C-terminus: MSQDQQQQQQFNANNLAGNVQNINLNAPAYDPAVQSYIPNTAQAFVPSAQPYIPGQQEQQFGQYGQQQQNYNQGGYNNYNNRGGYSNNRGGYNNSNRGGYSNYNSYNTNSNQGGYSNYNNNYANNSYNNNNNYNNNYNQGYNNYNSQPQGQDQQQETGSGQMSLEDYQKQQKESLNKLNTKPKKVLKLNLNSSTVKAPIVTKKKEEEPVNQESKTEEPAKEEIKNQEPAEAENKVEEESKVEAPTAAKPVSESEFPASTPKTEAKASKEVAAAAAALKKEVSQAKKESNVTNADALVKEQEEQIDASIVNDMFGGKDHMSIIFMGHVDAGKSTMGGNLLFLTGAVDKRTVEKYEREAKDAGRQGWYLSWIMDTNKEERNDGKTIEVGKSYFETDKRRYTILDAPGHKLYISEMIGGASQADVGVLVISSRKGEYEAGFERGGQSREHAILAKTQGVNKLVVVINKMDDPTVNWSKERYEECTTKLAMYLKGVGYQKGDVLFMPVSGYTGAGLKERVSQKDAPWYNGPSLLEYLDSMPLAVRKINDPFMLPISSKMKDLGTVIEGKIESGHVKKGQNLLVMPNKTQVEVTTIYNETEAEADSAFCGEQVRLRLRGIEEEDLSAGYVLSSINHPVKTVTRFEAQIAIVELKSILSTGFSCVMHVHTAIEEVTFTQLLHNLQKGTNRRSKKAPAFAKQGMKIIAVLETTEPVCIESYDDYPQLGRFTLRDQGQTIAIGKVTKLL.

The several sort of repeats stretch occupies residues 5–135 (QQQQQQFNAN…SYNNNNNYNN (131 aa)). The segment covering 59-161 (QQFGQYGQQQ…DQQQETGSGQ (103 aa)) has biased composition (low complexity). 2 disordered regions span residues 59–186 (QQFG…KKVL) and 199–264 (IVTK…KTEA). Residues 162–311 (MSLEDYQKQQ…EQIDASIVND (150 aa)) form a charged region. Composition is skewed to basic and acidic residues over residues 166-175 (DYQKQQKESL) and 202-241 (KKKE…ESKV). The region spanning 316–541 (KDHMSIIFMG…YLDSMPLAVR (226 aa)) is the tr-type G domain. The tract at residues 325 to 332 (GHVDAGKS) is G1. 325–332 (GHVDAGKS) contributes to the GTP binding site. The tract at residues 381-385 (GKTIE) is G2. Phosphothreonine is present on Thr399. The interval 402–405 (DAPG) is G3. Residues 402–406 (DAPGH) and 464–467 (NKMD) each bind GTP. The G4 stretch occupies residues 464–467 (NKMD). The interval 505 to 507 (SGY) is G5.

It belongs to the TRAFAC class translation factor GTPase superfamily. Classic translation factor GTPase family. ERF3 subfamily.

It is found in the cytoplasm. Its function is as follows. Involved in translation termination. Stimulates the activity of ERF1. Binds guanine nucleotides. The protein is Eukaryotic peptide chain release factor GTP-binding subunit (SUP2) of Ogataea pini (Yeast).